A 147-amino-acid polypeptide reads, in one-letter code: UPF0216 protein MK1676 (147 aa).

Belongs to the UPF0216 family.

The protein is UPF0216 protein MK1676 of Methanopyrus kandleri (strain AV19 / DSM 6324 / JCM 9639 / NBRC 100938).